Consider the following 155-residue polypeptide: SsrA-binding protein (155 aa).

Belongs to the SmpB family.

The protein localises to the cytoplasm. Functionally, required for rescue of stalled ribosomes mediated by trans-translation. Binds to transfer-messenger RNA (tmRNA), required for stable association of tmRNA with ribosomes. tmRNA and SmpB together mimic tRNA shape, replacing the anticodon stem-loop with SmpB. tmRNA is encoded by the ssrA gene; the 2 termini fold to resemble tRNA(Ala) and it encodes a 'tag peptide', a short internal open reading frame. During trans-translation Ala-aminoacylated tmRNA acts like a tRNA, entering the A-site of stalled ribosomes, displacing the stalled mRNA. The ribosome then switches to translate the ORF on the tmRNA; the nascent peptide is terminated with the 'tag peptide' encoded by the tmRNA and targeted for degradation. The ribosome is freed to recommence translation, which seems to be the essential function of trans-translation. In Bacillus cereus (strain ATCC 10987 / NRS 248), this protein is SsrA-binding protein.